The chain runs to 270 residues: Probable septum site-determining protein MinC (270 aa).

Residues 105–129 form a disordered region; it reads DRRAPSSKAADEAPVQQAEPAAPAA. Over residues 116–129 the composition is skewed to low complexity; the sequence is EAPVQQAEPAAPAA.

The protein belongs to the MinC family. Interacts with MinD and FtsZ.

In terms of biological role, cell division inhibitor that blocks the formation of polar Z ring septums. Rapidly oscillates between the poles of the cell to destabilize FtsZ filaments that have formed before they mature into polar Z rings. Prevents FtsZ polymerization. This Burkholderia pseudomallei (strain 668) protein is Probable septum site-determining protein MinC.